Reading from the N-terminus, the 132-residue chain is NADH-quinone oxidoreductase subunit I 1 (132 aa).

4Fe-4S ferredoxin-type domains are found at residues 42–71 and 81–110; these read LKVS…VEAG and ERYE…MTGQ. [4Fe-4S] cluster is bound by residues cysteine 51, cysteine 54, cysteine 57, cysteine 61, cysteine 90, cysteine 93, cysteine 96, and cysteine 100.

It belongs to the complex I 23 kDa subunit family. As to quaternary structure, NDH-1 is composed of 14 different subunits. Subunits NuoA, H, J, K, L, M, N constitute the membrane sector of the complex. It depends on [4Fe-4S] cluster as a cofactor.

The protein localises to the cell inner membrane. The enzyme catalyses a quinone + NADH + 5 H(+)(in) = a quinol + NAD(+) + 4 H(+)(out). NDH-1 shuttles electrons from NADH, via FMN and iron-sulfur (Fe-S) centers, to quinones in the respiratory chain. The immediate electron acceptor for the enzyme in this species is believed to be ubiquinone. Couples the redox reaction to proton translocation (for every two electrons transferred, four hydrogen ions are translocated across the cytoplasmic membrane), and thus conserves the redox energy in a proton gradient. This is NADH-quinone oxidoreductase subunit I 1 from Geobacter sulfurreducens (strain ATCC 51573 / DSM 12127 / PCA).